The primary structure comprises 209 residues: Uracil phosphoribosyltransferase (209 aa).

5-phospho-alpha-D-ribose 1-diphosphate contacts are provided by residues Arg79, Arg104, and Asp131–Ser139. Uracil is bound by residues Ile194 and Gly199 to Ala201. Asp200 is a 5-phospho-alpha-D-ribose 1-diphosphate binding site.

This sequence belongs to the UPRTase family. It depends on Mg(2+) as a cofactor.

It carries out the reaction UMP + diphosphate = 5-phospho-alpha-D-ribose 1-diphosphate + uracil. The protein operates within pyrimidine metabolism; UMP biosynthesis via salvage pathway; UMP from uracil: step 1/1. With respect to regulation, allosterically activated by GTP. Its function is as follows. Catalyzes the conversion of uracil and 5-phospho-alpha-D-ribose 1-diphosphate (PRPP) to UMP and diphosphate. The polypeptide is Uracil phosphoribosyltransferase (Streptococcus thermophilus (strain CNRZ 1066)).